The following is a 368-amino-acid chain: 3-dehydroquinate synthase (368 aa).

NAD(+)-binding positions include 112 to 116 (GVIGD), 136 to 137 (TT), lysine 149, and lysine 158. Residues glutamate 191, histidine 256, and histidine 273 each contribute to the Zn(2+) site.

This sequence belongs to the sugar phosphate cyclases superfamily. Dehydroquinate synthase family. Co(2+) serves as cofactor. Zn(2+) is required as a cofactor. The cofactor is NAD(+).

The protein localises to the cytoplasm. It catalyses the reaction 7-phospho-2-dehydro-3-deoxy-D-arabino-heptonate = 3-dehydroquinate + phosphate. The protein operates within metabolic intermediate biosynthesis; chorismate biosynthesis; chorismate from D-erythrose 4-phosphate and phosphoenolpyruvate: step 2/7. In terms of biological role, catalyzes the conversion of 3-deoxy-D-arabino-heptulosonate 7-phosphate (DAHP) to dehydroquinate (DHQ). This chain is 3-dehydroquinate synthase, found in Prochlorococcus marinus (strain NATL1A).